Here is a 356-residue protein sequence, read N- to C-terminus: Cyanide hydratase (356 aa).

The region spanning 8-287 (YKAAAVNAEP…EGLLFVDIDL (280 aa)) is the CN hydrolase domain. The active-site Proton acceptor is E48. The active site involves K130. The active-site Nucleophile is C165.

It belongs to the carbon-nitrogen hydrolase superfamily. Nitrilase family. In terms of assembly, oligomer of dimers, forming left-handed helical fibers.

The catalysed reaction is formamide = hydrogen cyanide + H2O. In terms of biological role, catalyzes the hydration of cyanide to formamide. Degradation of cyanide may be important for plant pathogenic fungi in infection of cyanogenic plants. Can also transform some nitriles like 2-cyanopyridine and fumaronitrile. In Aspergillus niger, this protein is Cyanide hydratase.